The following is a 148-amino-acid chain: MATKIKLQRLGKMREPHYRIVVADARTKRDGRVIESIGQYHPKSDPSIIKVDAERVGHWLSVGAQPTEPVLAILKVTGDWQKFKNLPAPPPMKVAEPKADKREIFQAAARAAAGAEDRPATTPKKAKKSGSAEEAEAAPATDAPAAGQ.

The disordered stretch occupies residues 106–148 (QAAARAAAGAEDRPATTPKKAKKSGSAEEAEAAPATDAPAAGQ). Low complexity predominate over residues 137–148 (AAPATDAPAAGQ).

The protein belongs to the bacterial ribosomal protein bS16 family.

The chain is Small ribosomal subunit protein bS16 from Frankia casuarinae (strain DSM 45818 / CECT 9043 / HFP020203 / CcI3).